The primary structure comprises 232 residues: Thiamine import ATP-binding protein ThiQ (232 aa).

Residues 2 to 230 (LKLTDITWLY…KGSASAIWGI (229 aa)) enclose the ABC transporter domain. 32 to 39 (GPSGAGKS) contacts ATP.

The protein belongs to the ABC transporter superfamily. Thiamine importer (TC 3.A.1.19.1) family. As to quaternary structure, the complex is composed of two ATP-binding proteins (ThiQ), two transmembrane proteins (ThiP) and a solute-binding protein (ThiB).

The protein localises to the cell inner membrane. It carries out the reaction thiamine(out) + ATP + H2O = thiamine(in) + ADP + phosphate + H(+). Its function is as follows. Part of the ABC transporter complex ThiBPQ involved in thiamine import. Responsible for energy coupling to the transport system. This is Thiamine import ATP-binding protein ThiQ from Shigella flexneri.